The following is a 308-amino-acid chain: Ornithine carbamoyltransferase (308 aa).

Carbamoyl phosphate-binding positions include 57-60 (STRT), Gln-84, Arg-108, and 135-138 (HPCQ). L-ornithine is bound by residues Asn-166, Asp-224, and 228–229 (SM). Carbamoyl phosphate contacts are provided by residues 264-265 (CL) and Arg-292.

The protein belongs to the aspartate/ornithine carbamoyltransferase superfamily. OTCase family.

It is found in the cytoplasm. It catalyses the reaction carbamoyl phosphate + L-ornithine = L-citrulline + phosphate + H(+). The protein operates within amino-acid degradation; L-arginine degradation via ADI pathway; carbamoyl phosphate from L-arginine: step 2/2. In terms of biological role, reversibly catalyzes the transfer of the carbamoyl group from carbamoyl phosphate (CP) to the N(epsilon) atom of ornithine (ORN) to produce L-citrulline. This chain is Ornithine carbamoyltransferase, found in Ralstonia pickettii (strain 12J).